The chain runs to 561 residues: Asparagine synthetase [glutamine-hydrolyzing] (561 aa).

Cys-2 functions as the For GATase activity in the catalytic mechanism. The region spanning 2 to 191 is the Glutamine amidotransferase type-2 domain; it reads CGIWALFGSD…PGHYEVLDLK (190 aa). Residues 49–53, 75–77, and Asp-97 each bind L-glutamine; these read RLAVV and NGE. One can recognise an Asparagine synthetase domain in the interval 213–536; the sequence is HAACDTVGNL…PGRSSWLPHY (324 aa). ATP is bound by residues Leu-256, Ile-288, and 363–364; that span reads SG.

It carries out the reaction L-aspartate + L-glutamine + ATP + H2O = L-asparagine + L-glutamate + AMP + diphosphate + H(+). It functions in the pathway amino-acid biosynthesis; L-asparagine biosynthesis; L-asparagine from L-aspartate (L-Gln route): step 1/1. The polypeptide is Asparagine synthetase [glutamine-hydrolyzing] (ASNS) (Gallus gallus (Chicken)).